The sequence spans 424 residues: Sulfatase ppz1 (424 aa).

Ca(2+)-binding residues include Asp-13, Asp-203, and Asn-204.

The protein belongs to the sulfatase family. Ca(2+) is required as a cofactor.

In terms of biological role, sulfatase; part of the gene cluster that mediates the biosynthesis of pyrrolopyrazines, secondary metabolites showing insecticidal activity. The role of ppz1 within the pathway has still to be determined. The single multifunctional NRPS ppzA is sufficient to produce peramine via condensation of 1-pyrroline-5-carboxylate and arginine, N-methylation of the alpha-amino group of arginine and reduction of the thioester and the cyclization to form an iminium ion resulting in release from the peptide synthetase. Deprotonation of this intermediate and oxidation of the pyrroline ring would give rise to peramine. In Epichloe species that produce only peramine, the peramine synthetase gene is not localized in a gene cluster, in contrast to Metarhizium species that contain additional pyrrolopyrazine biosynthesis genes. The 2-oxoglutarate-Fe(II) type oxidoreductase ppzC hydroxylates peramine to yield the newly identified compound 8-hydroxyperamine whereas ppzD converts L-proline into trans-4-hydroxy-L-proline, a precursor of peramine biosynthesis. This Metarhizium majus (strain ARSEF 297) protein is Sulfatase ppz1.